Here is a 144-residue protein sequence, read N- to C-terminus: uncharacterized protein (144 aa).

Residues 90 to 144 (KKEYSALKKSGKIHKVGGSKSSGHRKTKKPKKSMKGGSKTKKLSEKQLMKELLAM) form a disordered region. Residues 98–130 (KSGKIHKVGGSKSSGHRKTKKPKKSMKGGSKTK) are compositionally biased toward basic residues.

This is an uncharacterized protein from Sputnik virophage.